Consider the following 129-residue polypeptide: Cytochrome c-type protein SHP (129 aa).

The N-terminal stretch at 1–17 is a signal peptide; sequence MTRFLILSAVLAGPALA. Heme c contacts are provided by Cys60, Cys63, and His64. Cys106 and Cys114 are joined by a disulfide.

In terms of processing, binds 1 heme c group covalently per subunit.

In terms of biological role, high-spin cytochrome. Transiently bind oxygen during autoxidation, which occurs with a half-life of 3 minutes with a 4-fold excess of O(2). Also binds carbon monoxide, azide and cyanide. The polypeptide is Cytochrome c-type protein SHP (shp) (Cereibacter sphaeroides (strain ATCC 17023 / DSM 158 / JCM 6121 / CCUG 31486 / LMG 2827 / NBRC 12203 / NCIMB 8253 / ATH 2.4.1.) (Rhodobacter sphaeroides)).